Reading from the N-terminus, the 2531-residue chain is Highly reducing polyketide synthase ausV (2531 aa).

Residues 7–432 (STPIAIIGLS…GTNAHCVMET (426 aa)) form the Ketosynthase family 3 (KS3) domain. Residues Cys180, His315, and His355 each act as for beta-ketoacyl synthase activity in the active site. The malonyl-CoA:ACP transacylase (MAT) domain stretch occupies residues 554 to 882 (FVFTGQGAQW…HHTLLESMGS (329 aa)). Ser644 acts as the For malonyltransferase activity in catalysis. The segment at 939–1069 (HDLCGIRVED…GSVLAGTPSD (131 aa)) is N-terminal hotdog fold. A PKS/mFAS DH domain is found at 939–1238 (HDLCGIRVED…LATLSVRSGD (300 aa)). Residues 940–1236 (DLCGIRVEDD…LELATLSVRS (297 aa)) are dehydratase (DH) domain. Catalysis depends on His971, which acts as the Proton acceptor; for dehydratase activity. The segment at 1087–1238 (YVETTPRQAY…LATLSVRSGD (152 aa)) is C-terminal hotdog fold. The active-site Proton donor; for dehydratase activity is Asp1152. The segment at 1414-1592 (SSYLRLHARN…DTGFSGVDIS (179 aa)) is methyltransferase (CMet) domain. An enoyl reductase (ER) domain region spans residues 1832–2133 (LRFVQDPAYW…SGGAKPGCSR (302 aa)). Residues 2156-2331 (HGRALVPDFH…AGVSLSLGFI (176 aa)) form a ketoreductase (KR) domain region. The Carrier domain maps to 2444–2521 (AAATAVLDAL…ELARDLALRS (78 aa)). Ser2481 carries the post-translational modification O-(pantetheine 4'-phosphoryl)serine.

The protein operates within secondary metabolite biosynthesis; terpenoid biosynthesis. Functionally, highly reducing polyketide synthase; part of the gene cluster that mediates the biosynthesis of calidodehydroaustin, a fungal meroterpenoid. The first step of the pathway is the synthesis of 3,5-dimethylorsellinic acid by the polyketide synthase ausA. 3,5-dimethylorsellinic acid is then prenylated by the polyprenyl transferase ausN. Further epoxidation by the FAD-dependent monooxygenase ausM and cyclization by the probable terpene cyclase ausL lead to the formation of protoaustinoid A. Protoaustinoid A is then oxidized to spiro-lactone preaustinoid A3 by the combined action of the FAD-binding monooxygenases ausB and ausC, and the dioxygenase ausE. Acid-catalyzed keto-rearrangement and ring contraction of the tetraketide portion of preaustinoid A3 by ausJ lead to the formation of preaustinoid A4. The aldo-keto reductase ausK, with the help of ausH, is involved in the next step by transforming preaustinoid A4 into isoaustinone which is in turn hydroxylated by the P450 monooxygenase ausI to form austinolide. The cytochrome P450 monooxygenase ausG modifies austinolide to austinol. Austinol is further acetylated to austin by the O-acetyltransferase ausP, which spontaneously changes to dehydroaustin. The cytochrome P450 monooxygenase ausR then converts dehydroaustin is into 7-dehydrodehydroaustin. The hydroxylation catalyzed by ausR permits the O-acetyltransferase ausQ to add an additional acetyl group to the molecule, leading to the formation of acetoxydehydroaustin. The short chain dehydrogenase ausT catalyzes the reduction of the double bond present between carbon atoms 1 and 2 to convert 7-dehydrodehydroaustin into 1,2-dihydro-7-hydroxydehydroaustin. AusQ catalyzes not only an acetylation reaction but also the addition of the PKS ausV diketide product to 1,2-dihydro-7-hydroxydehydroaustin, forming precalidodehydroaustin. Finally, the iron/alpha-ketoglutarate-dependent dioxygenase converts precalidodehydroaustin into calidodehydroaustin. This Aspergillus calidoustus protein is Highly reducing polyketide synthase ausV.